Reading from the N-terminus, the 336-residue chain is tRNA(Ile)-lysidine synthase (336 aa).

Ser-40 to Ser-45 provides a ligand contact to ATP.

Belongs to the tRNA(Ile)-lysidine synthase family.

It is found in the cytoplasm. The enzyme catalyses cytidine(34) in tRNA(Ile2) + L-lysine + ATP = lysidine(34) in tRNA(Ile2) + AMP + diphosphate + H(+). Ligates lysine onto the cytidine present at position 34 of the AUA codon-specific tRNA(Ile) that contains the anticodon CAU, in an ATP-dependent manner. Cytidine is converted to lysidine, thus changing the amino acid specificity of the tRNA from methionine to isoleucine. This Prochlorococcus marinus subsp. pastoris (strain CCMP1986 / NIES-2087 / MED4) protein is tRNA(Ile)-lysidine synthase.